Here is a 685-residue protein sequence, read N- to C-terminus: Sorbicillinoid biosynthetic cluster transcription factor sor4 (685 aa).

Positions 1 to 14 (MGSSATATTTGEST) are enriched in low complexity. The segment at 1–20 (MGSSATATTTGESTRQQPGL) is disordered. Positions 22–49 (CEECRRRKARCDRVRPKCGICADSGRNC) form a DNA-binding region, zn(2)-C6 fungal-type. Residues 81–112 (GQNDAPSLPQERDSLGCPTPSEKVSPEGDLVS) are disordered.

The protein localises to the nucleus. Transcription factor that acts as the main regulator of the gene cluster that mediates the biosynthesis of sorbicillinoids, a diverse group of yellow secondary metabolites that restrict growth of competing pathogenic fungi but not of bacteria. The chain is Sorbicillinoid biosynthetic cluster transcription factor sor4 from Hypocrea jecorina (strain QM6a) (Trichoderma reesei).